The chain runs to 395 residues: Phosphoprotein (395 aa).

3 disordered regions span residues 34 to 104 (VGRS…ADEA), 126 to 179 (NKSS…GTDA), and 192 to 214 (LSAG…PAPV). Positions 65-74 (TPDRQDRSDK) are enriched in basic and acidic residues. 2 stretches are compositionally biased toward polar residues: residues 89-98 (PATSTDQPPT) and 147-178 (PTQQ…QGTD). Residues 222-285 (DFVQAMMSMM…LGMMKILDPG (64 aa)) form a multimerization region.

It belongs to the rubulavirus/avulavirus P protein family. As to quaternary structure, homotetramer. Interacts (via multimerization domain) with polymerase L; this interaction forms the polymerase L-P complex. Interacts (via N-terminus) with N0 (via Ncore); this interaction allows P to chaperon N0 to avoid N polymerization before encapsidation. Interacts (via C-terminus) with N-RNA template; this interaction positions the polymerase on the template for both transcription and replication.

Essential cofactor of the RNA polymerase L that plays a central role in the transcription and replication by forming the polymerase complex with RNA polymerase L and recruiting L to the genomic N-RNA template for RNA synthesis. Also plays a central role in the encapsidation of nascent RNA chains by forming the encapsidation complex with the nucleocapsid protein N (N-P complex). Acts as a chaperone for newly synthesized free N protein, so-called N0, allowing encapsidation of nascent RNA chains during replication. The nucleoprotein protein N prevents excessive phosphorylation of P, which leads to down-regulation of viral transcription/ replication. Participates, together with N, in the formation of viral factories (viroplasms), which are large inclusions in the host cytoplasm where replication takes place. This chain is Phosphoprotein (P/V), found in Newcastle disease virus (strain Ulster/2C) (NDV).